Consider the following 1482-residue polypeptide: Cystic fibrosis transmembrane conductance regulator (1482 aa).

Topologically, residues 1–77 (MQRSPLEKAN…KLINALRRCF (77 aa)) are cytoplasmic. Residues 78–98 (FWRFVFHGIILYLGEVTKAVQ) traverse the membrane as a helical segment. In terms of domain architecture, ABC transmembrane type-1 1 spans 81–365 (FVFHGIILYL…WAVQTWYDSL (285 aa)). The Extracellular segment spans residues 99–122 (PLLLGRIIASYDPDNKVERSIAIY). The helical transmembrane segment at 123–146 (LGIGLCLLFIVRTLLLHPAIFGLH) threads the bilayer. Topologically, residues 147-195 (HMGMQMRIALFSLIYKKTLKLSSRVLDKISTGQLISLLSNNLNKFDEGL) are cytoplasmic. Residues 196 to 216 (ALAHFVWIVPLQVVLLMGLLW) form a helical membrane-spanning segment. Over 217–222 (DLLQAS) the chain is Extracellular. The helical transmembrane segment at 223 to 243 (AFCGLAFLIVLALFQAWLGQM) threads the bilayer. At 244–298 (MMKYRERRAGKINERLVITSEMIDNIQSVKAYCWEEAMEKMIENLRETELKLTRK) the chain is on the cytoplasmic side. Residues 299-319 (TAYVRYFNSSAFFFSGFFVVF) form a helical membrane-spanning segment. Over 320–339 (LAVLPYALIKGIILRKIFTT) the chain is Extracellular. Residues 340–358 (ISFCIVLRMAVTRQFPWAV) traverse the membrane as a helical segment. Topologically, residues 359-859 (QTWYDSLGAI…YLRYITIHKN (501 aa)) are cytoplasmic. Residues tryptophan 401, serine 434, 458 to 465 (GSTGAGKT), and glutamine 493 each bind ATP. In terms of domain architecture, ABC transporter 1 spans 423-646 (NGDNGLFFSN…RPDFSSKLMG (224 aa)). Cysteine 524 carries S-palmitoyl cysteine lipidation. A phosphoserine mark is found at serine 549 and serine 660. Positions 654–832 (SAERRSSILT…DEINEEDLKE (179 aa)) are disordered R region. Phosphoserine; by PKA is present on serine 670. At serine 686 the chain carries Phosphoserine. Residue lysine 688 forms a Glycyl lysine isopeptide (Lys-Gly) (interchain with G-Cter in ubiquitin) linkage. Phosphoserine is present on residues serine 700, serine 712, serine 737, serine 769, serine 796, and serine 814. Residues 860-880 (LVFVLIWCLVIFLVEVAASLV) form a helical membrane-spanning segment. The ABC transmembrane type-1 2 domain occupies 860 to 1156 (LVFVLIWCLV…AVNSSIDVDS (297 aa)). Residues 881–919 (GLWLLEDISFKDKTNGTNGANNTFPVIITDTSKYYLFYI) lie on the Extracellular side of the membrane. 2 N-linked (GlcNAc...) asparagine glycosylation sites follow: asparagine 895 and asparagine 901. Residues 920–940 (YVGIADTFFALGIFRGLPLVH) traverse the membrane as a discontinuously helical segment. At 941 to 991 (TLISVSKILHHKMLYSVLKAPMSTFNTLKPGGILNRFSKDIAILDDLLPLT) the chain is on the cytoplasmic side. A helical transmembrane segment spans residues 992–1012 (IFDFIQLILIVVGALIVVSAI). At 1013 to 1014 (RP) the chain is on the extracellular side. Residues 1015-1035 (YIFLATVPVIIAFIMLRAYFL) form a helical membrane-spanning segment. Topologically, residues 1036 to 1096 (QTSQQLKQLE…TASWFLYLST (61 aa)) are cytoplasmic. The chain crosses the membrane as a helical span at residues 1097–1117 (LRWFQMRIELVFVIFFIAVTF). Topologically, residues 1118 to 1131 (ISILTTGDGEGRVG) are extracellular. Residues 1132-1152 (ILLTLAMNIMSTLQWAVNSSI) form a helical membrane-spanning segment. Topologically, residues 1153–1482 (DVDSLMRSVS…TEEEVQETRL (330 aa)) are cytoplasmic. One can recognise an ABC transporter 2 domain in the interval 1212–1445 (MIVKDLTAKY…KSLYRQAISH (234 aa)). ATP contacts are provided by residues tyrosine 1221 and 1246–1253 (GRTGSGKS). Residues 1388-1482 (RVLKNAFANC…TEEEVQETRL (95 aa)) form an interaction with GORASP2 region. The S-palmitoyl cysteine moiety is linked to residue cysteine 1397. Phosphoserine occurs at positions 1446 and 1458. Positions 1480 to 1482 (TRL) match the PDZ-binding motif.

It belongs to the ABC transporter superfamily. ABCC family. CFTR transporter (TC 3.A.1.202) subfamily. As to quaternary structure, monomer; does not require oligomerization for channel activity. May form oligomers in the membrane. Interacts with SLC26A3, SLC26A6 and NHERF1. Interacts with SHANK2. Interacts with MYO6. Interacts (via C-terminus) with GOPC (via PDZ domain); this promotes CFTR internalization and thereby decreases channel activity. Interacts with SLC4A7 through NHERF1. Found in a complex with MYO5B and RAB11A. Interacts with ANO1. Interacts with SLC26A8. Interacts with AHCYL1; the interaction increases CFTR activity. Interacts with CSE1L. The core-glycosylated form interacts with GORASP2 (via PDZ GRASP-type 1 domain) in respone to ER stress. Interacts with MARCHF2; the interaction leads to CFTR ubiqtuitination and degradation. Interacts with ADGRG2. In terms of processing, N-glycosylated. Phosphorylated; cAMP treatment promotes phosphorylation and activates the channel. Dephosphorylation decreases the ATPase activity (in vitro). Phosphorylation at PKA sites activates the channel. Phosphorylation at PKC sites enhances the response to phosphorylation by PKA. Phosphorylated by AMPK; this inhibits channel activity. Post-translationally, ubiquitinated, leading to its degradation in the lysosome. Deubiquitination by USP10 in early endosomes enhances its endocytic recycling to the cell membrane. Ubiquitinated by RNF185 during ER stress. Ubiquitinated by MARCHF2.

The protein resides in the apical cell membrane. It localises to the early endosome membrane. It is found in the cell membrane. The protein localises to the recycling endosome membrane. Its subcellular location is the endoplasmic reticulum membrane. The protein resides in the nucleus. The catalysed reaction is ATP + H2O + closed Cl(-) channel = ADP + phosphate + open Cl(-) channel.. It catalyses the reaction chloride(in) = chloride(out). The enzyme catalyses hydrogencarbonate(in) = hydrogencarbonate(out). It carries out the reaction ATP + H2O = ADP + phosphate + H(+). Epithelial ion channel that plays an important role in the regulation of epithelial ion and water transport and fluid homeostasis. Mediates the transport of chloride ions across the cell membrane. Possesses an intrinsic ATPase activity and utilizes ATP to gate its channel; the passive flow of anions through the channel is gated by cycles of ATP binding and hydrolysis by the ATP-binding domains. The ion channel is also permeable to HCO(3)(-); selectivity depends on the extracellular chloride concentration. Exerts its function also by modulating the activity of other ion channels and transporters. Contributes to the regulation of the pH and the ion content of the epithelial fluid layer. Modulates the activity of the epithelial sodium channel (ENaC) complex, in part by regulating the cell surface expression of the ENaC complex. May regulate bicarbonate secretion and salvage in epithelial cells by regulating the transporter SLC4A7. Can inhibit the chloride channel activity of ANO1. Plays a role in the chloride and bicarbonate homeostasis during sperm epididymal maturation and capacitation. In Didelphis virginiana (North American opossum), this protein is Cystic fibrosis transmembrane conductance regulator.